The sequence spans 61 residues: Metallothionein-2D (61 aa).

N-acetylmethionine is present on methionine 1. Residues 1–29 (MDPNCSCATRDSCACASSCKCKECKCTSC) form a beta region. Positions 5, 7, 13, 15, 19, 21, 24, 26, 29, 33, 34, 36, 37, 41, 44, 48, 50, 57, 59, and 60 each coordinate a divalent metal cation. Residues 30–61 (KKSCCSCCPAGCTKCAQGCICKGASDKCSCCA) form an alpha region.

Belongs to the metallothionein superfamily. Type 1 family. As to quaternary structure, monomer.

In terms of biological role, metallothioneins have a high content of cysteine residues that bind various heavy metals; these proteins are transcriptionally regulated by both heavy metals and glucocorticoids. This chain is Metallothionein-2D, found in Oryctolagus cuniculus (Rabbit).